Reading from the N-terminus, the 209-residue chain is Orotate phosphoribosyltransferase (209 aa).

Residues Arg96, Lys100, His102, and 122–130 (EDLISTGGS) contribute to the 5-phospho-alpha-D-ribose 1-diphosphate site. Ser126 serves as a coordination point for orotate.

This sequence belongs to the purine/pyrimidine phosphoribosyltransferase family. PyrE subfamily. In terms of assembly, homodimer. The cofactor is Mg(2+).

The enzyme catalyses orotidine 5'-phosphate + diphosphate = orotate + 5-phospho-alpha-D-ribose 1-diphosphate. It functions in the pathway pyrimidine metabolism; UMP biosynthesis via de novo pathway; UMP from orotate: step 1/2. Catalyzes the transfer of a ribosyl phosphate group from 5-phosphoribose 1-diphosphate to orotate, leading to the formation of orotidine monophosphate (OMP). The polypeptide is Orotate phosphoribosyltransferase (Cytophaga hutchinsonii (strain ATCC 33406 / DSM 1761 / CIP 103989 / NBRC 15051 / NCIMB 9469 / D465)).